A 388-amino-acid polypeptide reads, in one-letter code: Norsolorinic acid reductase (388 aa).

Catalysis depends on Tyr-74, which acts as the Proton donor. 233–243 (GVLGRGQFRSA) is an NADP(+) binding site.

Belongs to the aldo/keto reductase family. Aldo/keto reductase 2 subfamily.

It functions in the pathway mycotoxin biosynthesis; aflatoxin biosynthesis. The protein is Norsolorinic acid reductase (norA) of Aspergillus flavus (strain ATCC 200026 / FGSC A1120 / IAM 13836 / NRRL 3357 / JCM 12722 / SRRC 167).